Reading from the N-terminus, the 435-residue chain is Casein kinase 1-like protein 12 (435 aa).

The Protein kinase domain maps to tyrosine 9 to isoleucine 278. ATP contacts are provided by residues isoleucine 15 to isoleucine 23 and lysine 38. Catalysis depends on aspartate 128, which acts as the Proton acceptor. Disordered stretches follow at residues valine 313–methionine 363 and leucine 394–histidine 414.

The protein belongs to the protein kinase superfamily. CK1 Ser/Thr protein kinase family. Casein kinase I subfamily. Monomer. Post-translationally, autophosphorylated.

The protein resides in the cytoplasm. It catalyses the reaction L-seryl-[protein] + ATP = O-phospho-L-seryl-[protein] + ADP + H(+). It carries out the reaction L-threonyl-[protein] + ATP = O-phospho-L-threonyl-[protein] + ADP + H(+). Functionally, casein kinases are operationally defined by their preferential utilization of acidic proteins such as caseins as substrates. It can phosphorylate a large number of proteins. The polypeptide is Casein kinase 1-like protein 12 (Arabidopsis thaliana (Mouse-ear cress)).